Consider the following 494-residue polypeptide: Catalase A (494 aa).

Residues 1–23 (MTDRPTITTTAGAPVPDNQNSLT) are compositionally biased toward polar residues. The interval 1–25 (MTDRPTITTTAGAPVPDNQNSLTAG) is disordered. Residues H55 and N127 contribute to the active site. Y337 serves as a coordination point for heme.

It belongs to the catalase family. It depends on heme as a cofactor.

Its subcellular location is the periplasm. The catalysed reaction is 2 H2O2 = O2 + 2 H2O. Functionally, decomposes hydrogen peroxide into water and oxygen; serves to protect cells from the toxic effects of hydrogen peroxide. The sequence is that of Catalase A (katA) from Rhizobium meliloti (strain 1021) (Ensifer meliloti).